A 328-amino-acid polypeptide reads, in one-letter code: L-lactate dehydrogenase (328 aa).

NAD(+) is bound by residues Val-18, Glu-39, Lys-46, Tyr-71, and 85–86 (GA). 2 residues coordinate substrate: Gln-88 and Arg-94. NAD(+) contacts are provided by residues Ser-107, 124-126 (AAN), and Ser-149. 126–129 (NPVD) serves as a coordination point for substrate. 154–157 (DSAR) lines the substrate pocket. The beta-D-fructose 1,6-bisphosphate site is built by Arg-159 and His-174. His-181 functions as the Proton acceptor in the catalytic mechanism. Tyr-226 is modified (phosphotyrosine). Thr-235 contacts substrate.

Belongs to the LDH/MDH superfamily. LDH family. In terms of assembly, homotetramer.

The protein localises to the cytoplasm. It carries out the reaction (S)-lactate + NAD(+) = pyruvate + NADH + H(+). It participates in fermentation; pyruvate fermentation to lactate; (S)-lactate from pyruvate: step 1/1. Allosterically activated by fructose 1,6-bisphosphate (FBP). In terms of biological role, catalyzes the conversion of lactate to pyruvate. This Streptococcus gordonii (strain Challis / ATCC 35105 / BCRC 15272 / CH1 / DL1 / V288) protein is L-lactate dehydrogenase.